The following is a 275-amino-acid chain: Large ribosomal subunit protein uL2c (275 aa).

2 disordered regions span residues 1-30 (MAIHLYKTSTPSTRNGAVDSQAKSTPQKQK) and 225-275 (MNPV…RRRK). A compositionally biased stretch (polar residues) spans 21–30 (QAKSTPQKQK).

Belongs to the universal ribosomal protein uL2 family. In terms of assembly, part of the 50S ribosomal subunit.

The protein resides in the plastid. It localises to the chloroplast. The chain is Large ribosomal subunit protein uL2c (rpl2) from Illicium oligandrum (Star anise).